Consider the following 144-residue polypeptide: Large ribosomal subunit protein uL15 (144 aa).

Residues 1–53 (MRLNTLSPAEGAKHAPKRVGRGIGSGLGKTAGRGHKGQNSRSGGGVRRGFEGG) are disordered. The segment covering 21 to 31 (RGIGSGLGKTA) has biased composition (gly residues).

This sequence belongs to the universal ribosomal protein uL15 family. In terms of assembly, part of the 50S ribosomal subunit.

In terms of biological role, binds to the 23S rRNA. This is Large ribosomal subunit protein uL15 from Serratia proteamaculans (strain 568).